Reading from the N-terminus, the 433-residue chain is Peptidoglycan glycosyltransferase RodA (433 aa).

12 helical membrane-spanning segments follow: residues 9–29 (FDYL…LFIY), 44–64 (YLKQ…VSMY), 74–94 (TLIF…GRYV), 100–120 (WIGV…AYIL), 158–178 (LGTA…AGFP), 181–201 (LIFA…LPLW), 221–241 (LSLF…VGYL), 249–269 (YWIT…LLGV), 295–315 (WHII…MGYL), 341–361 (WGFV…LHTL), 378–398 (GVLG…MGIM), and 400–420 (ITGI…TAMI).

The protein belongs to the SEDS family. MrdB/RodA subfamily.

Its subcellular location is the cell inner membrane. It catalyses the reaction [GlcNAc-(1-&gt;4)-Mur2Ac(oyl-L-Ala-gamma-D-Glu-L-Lys-D-Ala-D-Ala)](n)-di-trans,octa-cis-undecaprenyl diphosphate + beta-D-GlcNAc-(1-&gt;4)-Mur2Ac(oyl-L-Ala-gamma-D-Glu-L-Lys-D-Ala-D-Ala)-di-trans,octa-cis-undecaprenyl diphosphate = [GlcNAc-(1-&gt;4)-Mur2Ac(oyl-L-Ala-gamma-D-Glu-L-Lys-D-Ala-D-Ala)](n+1)-di-trans,octa-cis-undecaprenyl diphosphate + di-trans,octa-cis-undecaprenyl diphosphate + H(+). Its pathway is cell wall biogenesis; peptidoglycan biosynthesis. Its function is as follows. Peptidoglycan polymerase that is essential for cell wall elongation. The polypeptide is Peptidoglycan glycosyltransferase RodA (Treponema pallidum (strain Nichols)).